We begin with the raw amino-acid sequence, 436 residues long: Voltage-gated potassium channel regulatory subunit KCNG3 (436 aa).

Topologically, residues 1–168 (MTFGRSGAAS…RTFEEPTSSL (168 aa)) are cytoplasmic. Residues 169–190 (AAQILASVSVVFVIVSMVVLCA) traverse the membrane as a helical segment. Residues 191-220 (STLPDWRNAAADNRSLDDRSRYSAGPGREP) are Extracellular-facing. Residues 221-242 (SGIIEAICIGWFTAECIVRFIV) form a helical membrane-spanning segment. Topologically, residues 243-253 (SKNKCEFVKRP) are cytoplasmic. Residues 254-274 (LNIIDLLAITPYYISVLMTVF) form a helical membrane-spanning segment. At 275-284 (TGENSQLQRA) the chain is on the extracellular side. A helical; Voltage-sensor transmembrane segment spans residues 285–305 (GVTLRVLRMMRIFWVIKLARH). The Cytoplasmic segment spans residues 306–320 (FIGLQTLGLTLKRCY). Residues 321-342 (REMVMLLVFICVAMAIFSALSQ) form a helical membrane-spanning segment. Over 343 to 360 (LLEHGLDLETSNKDFTSI) the chain is Extracellular. Positions 361–372 (PAACWWVIISMT) form an intramembrane region, helical. The short motif at 373–378 (TVGYGD) is the Selectivity filter element. An intramembrane segment occupies 373–380 (TVGYGDMY). Residues 381-387 (PITVPGR) are Extracellular-facing. A helical transmembrane segment spans residues 388-416 (ILGGVCVVSGIVLLALPITFIYHSFVQCY). The Cytoplasmic segment spans residues 417 to 436 (HELKFRSARYSRSLSTEFLN).

This sequence belongs to the potassium channel family. G (TC 1.A.1.2) subfamily. Kv6.3/KCNG3 sub-subfamily. In terms of assembly, heterotetramer with KCNB1. Does not form homomultimers. As to expression, expressed in the brain, liver, testis, small intestine, colon, thymus and adrenal gland.

It localises to the cell membrane. The protein localises to the cytoplasm. Functionally, regulatory subunit of the voltage-gated potassium (Kv) channel which, when coassembled with KCNB1, modulates the kinetics parameters of the heterotetrameric channel namely the inactivation and deactivation rate. Potassium channel subunit that does not form functional channels by itself. Reduces the deactivation rate. Moderately accelerates activation. The sequence is that of Voltage-gated potassium channel regulatory subunit KCNG3 from Homo sapiens (Human).